A 372-amino-acid chain; its full sequence is Glutamate 5-kinase (372 aa).

An ATP-binding site is contributed by Lys-14. 3 residues coordinate substrate: Ser-54, Asp-141, and Asn-153. Residues Thr-173–Asp-174 and Thr-215–Lys-221 each bind ATP. In terms of domain architecture, PUA spans Gln-280 to Asp-358.

It belongs to the glutamate 5-kinase family.

It localises to the cytoplasm. It carries out the reaction L-glutamate + ATP = L-glutamyl 5-phosphate + ADP. The protein operates within amino-acid biosynthesis; L-proline biosynthesis; L-glutamate 5-semialdehyde from L-glutamate: step 1/2. Its function is as follows. Catalyzes the transfer of a phosphate group to glutamate to form L-glutamate 5-phosphate. The chain is Glutamate 5-kinase from Shewanella oneidensis (strain ATCC 700550 / JCM 31522 / CIP 106686 / LMG 19005 / NCIMB 14063 / MR-1).